A 341-amino-acid polypeptide reads, in one-letter code: MEEKFRNLIEVWISALISLSYCYYISSKLSKGVLRLLSILPVCILFLVLPLFLSCVHFCAISVLFLSWLANFKLLLFAFDEGPLFPLPPKLSRFICFACLPIKIRQDPSPNAIPNLHPKPMPKWVLAVKILVLGVLLHVYEYRDGLPRFVVLALYCLHIYLEVELVLVFVGAVVSTLLGCNIEPVFNEPYLATSLQDFWSRRWNLMVSAVLRSTVHIPVQRFFKRILSPDGAMFAGVMASFFVSGLMHELLYFYMIRKPPTWEVTCFFVLHGAATATEIAVKRTQWLRPPHRAVSGLVVLTFVSVTGVWLFLAQVLRNNVHEKAIGECLLVLDLAKLFTSS.

8 helical membrane passes run 7–27, 36–56, 58–78, 120–140, 149–169, 233–253, 261–281, and 293–313; these read NLIE…YISS, LLSI…LSCV, FCAI…LLFA, PMPK…LHVY, FVVL…VLVF, MFAG…LLYF, TWEV…EIAV, and AVSG…LFLA.

This sequence belongs to the wax synthase family.

It is found in the membrane. It catalyses the reaction a long chain fatty alcohol + a fatty acyl-CoA = a wax ester + CoA. Catalyzes the final step in the synthesis of long-chain linear esters (waxes). The polypeptide is Probable long-chain-alcohol O-fatty-acyltransferase 1 (AT1) (Arabidopsis thaliana (Mouse-ear cress)).